The primary structure comprises 303 residues: N-acetyl-D-glucosamine kinase (303 aa).

Residues 4–11 (GFDVGGTK) and 133–140 (GFGGGLIY) contribute to the ATP site. H157, C177, C179, and C184 together coordinate Zn(2+).

It belongs to the ROK (NagC/XylR) family. NagK subfamily.

It carries out the reaction N-acetyl-D-glucosamine + ATP = N-acetyl-D-glucosamine 6-phosphate + ADP + H(+). It functions in the pathway cell wall biogenesis; peptidoglycan recycling. In terms of biological role, catalyzes the phosphorylation of N-acetyl-D-glucosamine (GlcNAc) derived from cell-wall degradation, yielding GlcNAc-6-P. This Vibrio vulnificus (strain CMCP6) protein is N-acetyl-D-glucosamine kinase.